We begin with the raw amino-acid sequence, 253 residues long: uncharacterized protein (253 aa).

It belongs to the methyltransferase superfamily.

This is an uncharacterized protein from Mycobacterium avium (strain 104).